A 295-amino-acid polypeptide reads, in one-letter code: Ethanolamine ammonia-lyase small subunit (295 aa).

V207, E228, and C258 together coordinate adenosylcob(III)alamin.

This sequence belongs to the EutC family. In terms of assembly, the basic unit is a heterodimer which dimerizes to form tetramers. The heterotetramers trimerize; 6 large subunits form a core ring with 6 small subunits projecting outwards. Requires adenosylcob(III)alamin as cofactor.

The protein resides in the bacterial microcompartment. The enzyme catalyses ethanolamine = acetaldehyde + NH4(+). The protein operates within amine and polyamine degradation; ethanolamine degradation. Its function is as follows. Catalyzes the deamination of various vicinal amino-alcohols to oxo compounds. Allows this organism to utilize ethanolamine as the sole source of nitrogen and carbon in the presence of external vitamin B12. The chain is Ethanolamine ammonia-lyase small subunit from Escherichia coli O81 (strain ED1a).